A 659-amino-acid chain; its full sequence is Nicastrin (659 aa).

An N-terminal signal peptide occupies residues 1–22 (MKIKNYFIIVFIIIVLSTDVIS). Residues 23 to 627 (SQSSIEDKMY…LFQVGSYANE (605 aa)) lie on the Extracellular side of the membrane. N-linked (GlcNAc...) asparagine glycosylation is found at Asn94, Asn172, Asn305, Asn389, Asn451, Asn475, Asn550, Asn553, and Asn600. The helical transmembrane segment at 628-648 (IWFLVSGLIELLLSVGIIFYI) threads the bilayer. At 649 to 659 (KKYLSKRYKLL) the chain is on the cytoplasmic side.

The protein belongs to the nicastrin family. Homodimer. Component of the gamma-secretase complex, a complex composed of a presenilin homodimer, nicastrin, aph1 and pen2.

The protein resides in the membrane. Its function is as follows. Essential subunit of the gamma-secretase complex, an endoprotease complex that catalyzes the intramembrane cleavage of integral membrane proteins such as Notch receptors and APP (amyloid-beta precursor protein). It probably represents a stabilizing cofactor required for the assembly of the gamma-secretase complex. This Dictyostelium discoideum (Social amoeba) protein is Nicastrin (ncstn).